The chain runs to 103 residues: Histone H4 (103 aa).

The segment covering 1–14 (MSGRGKGGKGLGKG) has biased composition (gly residues). The disordered stretch occupies residues 1–20 (MSGRGKGGKGLGKGGAKRHR). Lys-6 carries the post-translational modification N6-acetyl-N6-methyllysine; alternate. N6-methyllysine; alternate is present on residues Lys-6, Lys-9, and Lys-13. Lys-13 is modified (N6-acetyl-N6-methyllysine; alternate). The DNA-binding element occupies 17–21 (KRHRK). Lys-92 bears the N6-glutaryllysine mark.

This sequence belongs to the histone H4 family. In terms of assembly, the nucleosome is a histone octamer containing two molecules each of H2A, H2B, H3 and H4 assembled in one H3-H4 heterotetramer and two H2A-H2B heterodimers. The octamer wraps approximately 147 bp of DNA. Post-translationally, glutarylation at Lys-92 (H4K91glu) destabilizes nucleosomes by promoting dissociation of the H2A-H2B dimers from nucleosomes.

Its subcellular location is the nucleus. The protein resides in the chromosome. Its function is as follows. Core component of nucleosome. Nucleosomes wrap and compact DNA into chromatin, limiting DNA accessibility to the cellular machineries which require DNA as a template. Histones thereby play a central role in transcription regulation, DNA repair, DNA replication and chromosomal stability. DNA accessibility is regulated via a complex set of post-translational modifications of histones, also called histone code, and nucleosome remodeling. This Phanerodontia chrysosporium (White-rot fungus) protein is Histone H4 (H4.1).